A 374-amino-acid chain; its full sequence is DNA replication and repair protein RecF (374 aa).

Position 34–41 (34–41) interacts with ATP; sequence GNNGAGKT.

Belongs to the RecF family.

Its subcellular location is the cytoplasm. In terms of biological role, the RecF protein is involved in DNA metabolism; it is required for DNA replication and normal SOS inducibility. RecF binds preferentially to single-stranded, linear DNA. It also seems to bind ATP. This chain is DNA replication and repair protein RecF, found in Rhizobium etli (strain CIAT 652).